Reading from the N-terminus, the 425-residue chain is tRNA(Met) cytidine acetate ligase (425 aa).

ATP is bound by residues 7–20 (IVEY…HLYH), Gly102, Asn165, and 190–191 (RI).

Belongs to the TmcAL family.

The protein resides in the cytoplasm. The catalysed reaction is cytidine(34) in elongator tRNA(Met) + acetate + ATP = N(4)-acetylcytidine(34) in elongator tRNA(Met) + AMP + diphosphate. Catalyzes the formation of N(4)-acetylcytidine (ac(4)C) at the wobble position of elongator tRNA(Met), using acetate and ATP as substrates. First activates an acetate ion to form acetyladenylate (Ac-AMP) and then transfers the acetyl group to tRNA to form ac(4)C34. The polypeptide is tRNA(Met) cytidine acetate ligase (Thermosipho melanesiensis (strain DSM 12029 / CIP 104789 / BI429)).